The chain runs to 292 residues: Probable septum site-determining protein MinC (292 aa).

The disordered stretch occupies residues Asp112 to Thr188. Residues Glu128–Ala137 show a composition bias toward low complexity. Over residues Gln140 to Asp150 the composition is skewed to acidic residues. Residues Ala171–Leu185 are compositionally biased toward polar residues.

It belongs to the MinC family. In terms of assembly, interacts with MinD and FtsZ.

Cell division inhibitor that blocks the formation of polar Z ring septums. Rapidly oscillates between the poles of the cell to destabilize FtsZ filaments that have formed before they mature into polar Z rings. Prevents FtsZ polymerization. The chain is Probable septum site-determining protein MinC from Bordetella bronchiseptica (strain ATCC BAA-588 / NCTC 13252 / RB50) (Alcaligenes bronchisepticus).